A 908-amino-acid polypeptide reads, in one-letter code: NADH-quinone oxidoreductase subunit G (908 aa).

Residues 2 to 83 (ATIHVDGKEY…GTFISIDDEE (82 aa)) form the 2Fe-2S ferredoxin-type domain. 4 residues coordinate [2Fe-2S] cluster: Cys34, Cys45, Cys48, and Cys67. Residues 83-122 (EAKQFRESVVEWLMTNHPHDCPVCEEGGNCHLQDMTVMTG) form the 4Fe-4S His(Cys)3-ligated-type domain. Residues His99, Cys103, Cys106, Cys112, Cys151, Cys154, Cys157, Cys201, Cys228, Cys231, Cys235, and Cys263 each contribute to the [4Fe-4S] cluster site. Residues 221–277 (MQFAPSICQQCSIGCNISPGERYGELRRIENRYNGTVNHYFLCDRGRFGYGYVNLKD) form the 4Fe-4S Mo/W bis-MGD-type domain.

This sequence belongs to the complex I 75 kDa subunit family. In terms of assembly, composed of 13 different subunits. Subunits NuoCD, E, F, and G constitute the peripheral sector of the complex. It depends on [2Fe-2S] cluster as a cofactor. Requires [4Fe-4S] cluster as cofactor.

The enzyme catalyses a quinone + NADH + 5 H(+)(in) = a quinol + NAD(+) + 4 H(+)(out). In terms of biological role, NDH-1 shuttles electrons from NADH, via FMN and iron-sulfur (Fe-S) centers, to quinones in the respiratory chain. The immediate electron acceptor for the enzyme in this species is believed to be ubiquinone. Couples the redox reaction to proton translocation (for every two electrons transferred, four hydrogen ions are translocated across the cytoplasmic membrane), and thus conserves the redox energy in a proton gradient. This Salmonella typhi protein is NADH-quinone oxidoreductase subunit G (nuoG).